The sequence spans 453 residues: Bestrophin homolog 5 (453 aa).

A run of 4 helical transmembrane segments spans residues 78–98, 113–133, 275–295, and 314–334; these read ELIV…FALT, DARM…NIII, IPLM…FLCI, and LYIP…LKVA.

This sequence belongs to the anion channel-forming bestrophin (TC 1.A.46) family. Calcium-sensitive chloride channel subfamily. Forms oligomers.

Its subcellular location is the cell membrane. Functionally, forms chloride channels. The protein is Bestrophin homolog 5 (best-5) of Caenorhabditis elegans.